The sequence spans 283 residues: Fructose-1,6-bisphosphatase class 1 (283 aa).

Residues glutamate 67, aspartate 86, leucine 88, and aspartate 89 each contribute to the Mg(2+) site. Substrate is bound by residues 89-92 (DGSS), tyrosine 195, and lysine 225. Glutamate 231 is a Mg(2+) binding site.

This sequence belongs to the FBPase class 1 family. As to quaternary structure, homotetramer. Mg(2+) is required as a cofactor.

Its subcellular location is the cytoplasm. It catalyses the reaction beta-D-fructose 1,6-bisphosphate + H2O = beta-D-fructose 6-phosphate + phosphate. Its pathway is carbohydrate biosynthesis; gluconeogenesis. The chain is Fructose-1,6-bisphosphatase class 1 from Natronomonas pharaonis (strain ATCC 35678 / DSM 2160 / CIP 103997 / JCM 8858 / NBRC 14720 / NCIMB 2260 / Gabara) (Halobacterium pharaonis).